The sequence spans 380 residues: Cytochrome b (380 aa).

Transmembrane regions (helical) follow at residues 33–53, 77–98, 113–133, and 178–198; these read FGSL…FLAM, WLIR…YMHI, WNIG…GYVL, and FFAF…LHLL. Heme b contacts are provided by H83 and H97. Residues H182 and H196 each contribute to the heme b site. H201 is an a ubiquinone binding site. A run of 4 helical transmembrane segments spans residues 226 to 246, 288 to 308, 320 to 340, and 347 to 367; these read YKDL…ALFA, LGGV…PILH, LTQF…WIGG, and FIII…VLSP.

The protein belongs to the cytochrome b family. In terms of assembly, the cytochrome bc1 complex contains 3 respiratory subunits (MT-CYB, CYC1 and UQCRFS1), 2 core proteins (UQCRC1 and UQCRC2) and probably 6 low-molecular weight proteins. Heme b is required as a cofactor.

The protein localises to the mitochondrion inner membrane. Functionally, component of the ubiquinol-cytochrome c reductase complex (complex III or cytochrome b-c1 complex) that is part of the mitochondrial respiratory chain. The b-c1 complex mediates electron transfer from ubiquinol to cytochrome c. Contributes to the generation of a proton gradient across the mitochondrial membrane that is then used for ATP synthesis. The protein is Cytochrome b (mt-cyb) of Oncorhynchus keta (Chum salmon).